A 118-amino-acid chain; its full sequence is Ribonuclease P protein component (118 aa).

This sequence belongs to the RnpA family. As to quaternary structure, consists of a catalytic RNA component (M1 or rnpB) and a protein subunit.

The catalysed reaction is Endonucleolytic cleavage of RNA, removing 5'-extranucleotides from tRNA precursor.. In terms of biological role, RNaseP catalyzes the removal of the 5'-leader sequence from pre-tRNA to produce the mature 5'-terminus. It can also cleave other RNA substrates such as 4.5S RNA. The protein component plays an auxiliary but essential role in vivo by binding to the 5'-leader sequence and broadening the substrate specificity of the ribozyme. This Vibrio vulnificus (strain CMCP6) protein is Ribonuclease P protein component.